A 1299-amino-acid chain; its full sequence is DNA-directed RNA polymerase subunit beta' (1299 aa).

The Zn(2+) site is built by C60, C62, C75, and C78. Residues D535, D537, and D539 each contribute to the Mg(2+) site. Positions 877, 954, 961, and 964 each coordinate Zn(2+).

Belongs to the RNA polymerase beta' chain family. In terms of assembly, the RNAP catalytic core consists of 2 alpha, 1 beta, 1 beta' and 1 omega subunit. When a sigma factor is associated with the core the holoenzyme is formed, which can initiate transcription. It depends on Mg(2+) as a cofactor. Zn(2+) serves as cofactor.

The enzyme catalyses RNA(n) + a ribonucleoside 5'-triphosphate = RNA(n+1) + diphosphate. DNA-dependent RNA polymerase catalyzes the transcription of DNA into RNA using the four ribonucleoside triphosphates as substrates. This Renibacterium salmoninarum (strain ATCC 33209 / DSM 20767 / JCM 11484 / NBRC 15589 / NCIMB 2235) protein is DNA-directed RNA polymerase subunit beta'.